We begin with the raw amino-acid sequence, 269 residues long: Monofunctional glycosyltransferase (269 aa).

The helical transmembrane segment at 46–66 (ILLTILIIIALFIGIMYFLST) threads the bilayer.

It belongs to the glycosyltransferase 51 family.

The protein localises to the cell membrane. The catalysed reaction is [GlcNAc-(1-&gt;4)-Mur2Ac(oyl-L-Ala-gamma-D-Glu-L-Lys-D-Ala-D-Ala)](n)-di-trans,octa-cis-undecaprenyl diphosphate + beta-D-GlcNAc-(1-&gt;4)-Mur2Ac(oyl-L-Ala-gamma-D-Glu-L-Lys-D-Ala-D-Ala)-di-trans,octa-cis-undecaprenyl diphosphate = [GlcNAc-(1-&gt;4)-Mur2Ac(oyl-L-Ala-gamma-D-Glu-L-Lys-D-Ala-D-Ala)](n+1)-di-trans,octa-cis-undecaprenyl diphosphate + di-trans,octa-cis-undecaprenyl diphosphate + H(+). The protein operates within cell wall biogenesis; peptidoglycan biosynthesis. Peptidoglycan polymerase that catalyzes glycan chain elongation using lipid-linked disaccharide-pentapeptide as the substrate. In Staphylococcus aureus (strain JH1), this protein is Monofunctional glycosyltransferase.